A 2341-amino-acid polypeptide reads, in one-letter code: Pecanex-like protein 1 (2341 aa).

Transmembrane regions (helical) follow at residues 28–50 (ATFV…FTLY) and 57–74 (MIIV…FIVL). Residues 98 to 163 (FTDQRTKAEQ…SNQIGSGSSR (66 aa)) form a disordered region. N-linked (GlcNAc...) asparagine glycosylation is present at N109. The segment covering 143 to 163 (SSRNSYAGLDPSNQIGSGSSR) has biased composition (polar residues). N215 is a glycosylation site (N-linked (GlcNAc...) asparagine). 3 disordered regions span residues 270–294 (HSHS…VAFP), 311–331 (DPVS…SLVE), and 344–689 (DLKI…TRAR). The segment covering 272-282 (HSYRKDHRPRG) has biased composition (basic residues). Composition is skewed to polar residues over residues 320–331 (KPLSGSKESLVE) and 347–356 (INTSQPPTKS). N-linked (GlcNAc...) asparagine glycosylation occurs at N348. Positions 370–388 (SLRSLSTRSSGSTESYCSG) are enriched in low complexity. N-linked (GlcNAc...) asparagine glycosylation is present at N394. The segment covering 394-404 (NSTVSSYKSEQ) has biased composition (polar residues). 3 stretches are compositionally biased toward basic and acidic residues: residues 430–455 (KKEC…EKIA), 465–478 (HEAK…EMHN), and 527–544 (SKVR…DVRP). The segment covering 554–569 (ASAHKSGRRRTGKKRA) has biased composition (basic residues). A compositionally biased stretch (low complexity) spans 605-635 (QSDLSRASSVQSAHQFSSDSSSSTTSHSCQS). A glycan (N-linked (GlcNAc...) asparagine) is linked at N702. Residues 756-834 (QVAFPEGEEQ…STAQVKVQSR (79 aa)) are disordered. Low complexity predominate over residues 814 to 832 (LSLQDGQQGQQSTAQVKVQ). N-linked (GlcNAc...) asparagine glycans are attached at residues N852 and N863. 3 helical membrane-spanning segments follow: residues 1003–1025 (ILEN…ILLI), 1032–1049 (IWVF…YSLL), and 1067–1089 (IAYS…DYGS). N1091 carries N-linked (GlcNAc...) asparagine glycosylation. The chain crosses the membrane as a helical span at residues 1110–1132 (FISARDLVIVFTLCFPIVFFIGL). N-linked (GlcNAc...) asparagine glycosylation occurs at N1155. Helical transmembrane passes span 1160 to 1182 (LLAA…GLCY), 1194 to 1213 (IPVL…YHLS), 1266 to 1288 (LVVC…FTVL), and 1295 to 1312 (VLYT…YVLP). Residues N1579, N1720, N1982, N2062, and N2072 are each glycosylated (N-linked (GlcNAc...) asparagine). Disordered regions lie at residues 2062–2120 (NATT…SPAR) and 2217–2237 (GQSS…NNSH). Composition is skewed to polar residues over residues 2069–2078 (PHSNVTQGSI), 2096–2114 (YPPT…SGLV), and 2217–2236 (GQSS…ANNS). N2234 and N2260 each carry an N-linked (GlcNAc...) asparagine glycan.

It belongs to the pecanex family.

It is found in the membrane. The polypeptide is Pecanex-like protein 1 (Homo sapiens (Human)).